The primary structure comprises 199 residues: MAITAQMVKELREKTGAGMMECKKALETSGGDFNKAIDILRQKGLATAQKKASREAKEGIITSYIHMDKIGVMLELNCETDFVARNEEFRQLAKDIAMQIAASNPQYIQREDIPQEVIEKEKEIYKSQIKGNKPPQVIEKIVEGKLEKFFEEMCLLDQPFIKEPEKKIKDLITEKVAKFGENIMVRRFVRFQVGQTQDE.

The interval 80–83 (TDFV) is involved in Mg(2+) ion dislocation from EF-Tu.

This sequence belongs to the EF-Ts family.

The protein resides in the cytoplasm. Associates with the EF-Tu.GDP complex and induces the exchange of GDP to GTP. It remains bound to the aminoacyl-tRNA.EF-Tu.GTP complex up to the GTP hydrolysis stage on the ribosome. This chain is Elongation factor Ts, found in Thermodesulfovibrio yellowstonii (strain ATCC 51303 / DSM 11347 / YP87).